Reading from the N-terminus, the 1696-residue chain is uncharacterized protein (1696 aa).

Disordered stretches follow at residues 1–113 (MDSS…HPQY), 151–194 (DSWT…SRSR), 258–284 (DVTR…PEKK), and 299–376 (GRRE…KQRG). Over residues 21 to 42 (LHPPSAPLPPPPPLPPPPPPRQ) the composition is skewed to pro residues. Positions 52-61 (GRSTQSNGQR) are enriched in polar residues. Residues 96 to 113 (QQQHQPLSLQQQQQHPQY) are compositionally biased toward low complexity. The span at 170-183 (RNYQYDYSRNSSGV) shows a compositional bias: polar residues. Basic and acidic residues-rich tracts occupy residues 267-284 (EGAR…PEKK), 325-340 (ETPR…EWSR), and 358-376 (RGKE…KQRG). A Phosphoserine modification is found at S378. 7 disordered regions span residues 419 to 483 (RALL…GGKL), 688 to 724 (SDIG…LDSP), 1063 to 1090 (IKHK…GGTS), 1184 to 1211 (TSKS…VAGS), 1319 to 1340 (GEAV…SGVR), 1361 to 1429 (VVSV…SDAS), and 1658 to 1696 (SESR…DSGM). Composition is skewed to basic and acidic residues over residues 421–436 (LLSD…ERNG) and 695–704 (DDNKRIDKNV). Phosphoserine is present on S708. The segment covering 1184–1204 (TSKSIEKIESSGGTSEHRTPE) has biased composition (basic and acidic residues). Over residues 1361 to 1370 (VVSVPHRDPQ) the composition is skewed to basic and acidic residues. 3 stretches are compositionally biased toward polar residues: residues 1389 to 1398 (NYSTQKSYPS), 1658 to 1667 (SESRCNQSIS), and 1677 to 1696 (SAAN…DSGM).

This is an uncharacterized protein from Arabidopsis thaliana (Mouse-ear cress).